The primary structure comprises 123 residues: DPEP2 neighbor protein (123 aa).

Residues 67 to 123 form a disordered region; it reads APLATPTKAEAEKPAPRRAPKRRQATIESDKDLGCSSPKIRRLEHRGRRLTPQKLAG. Over residues 105–117 the composition is skewed to basic residues; the sequence is KIRRLEHRGRRLT.

This is DPEP2 neighbor protein from Homo sapiens (Human).